The following is a 93-amino-acid chain: MDGIKYAVFTEKSLRLLGKNQYTFNVESGFTKTEIKHWVELFFGVKVVAVNSHRLPGKGRRMGPILGHTMHYRRMIITLQPGYSIPLLDRETN.

Belongs to the universal ribosomal protein uL23 family. Part of the 50S ribosomal subunit.

The protein resides in the plastid. It localises to the chloroplast. Its function is as follows. Binds to 23S rRNA. The chain is Large ribosomal subunit protein uL23cy (rpl23-B) from Sorghum bicolor (Sorghum).